The sequence spans 406 residues: MAIEQTAITRATFDEVILPIYAPAEFIPVKGQGSRIWDQQGKEYVDFAGGIAVTALGHCHPALVNALKTQGETLWHISNVFTNEPALRLGRKLIEATFAERVVFMNSGTEANETAFKLARHYACVRHSPFKTKIIAFHNAFHGRSLFTVSVGGQPKYSDGFGPKPADIIHVPFNDLHAVKAVMDDHTCAVVVEPIQGEGGVTAATPEFLQGLRELCDQHQALLVFDEVQCGMGRTGDLFAYMHYGVTPDILTSAKALGGGFPVSAMLTTAEIASAFHPGSHGSTYGGNPLACAVAGAAFDIINTPEVLEGIQAKRQHFVDHLQKIDQQYDVFSDIRGMGLLIGAELKPQYKGRARDFLYAGAEEGVMVLNAGPDVMRFAPSLVVEDADIDEGMHRFAHAVAKVVGA.

Residues 108-109 and F141 each bind pyridoxal 5'-phosphate; that span reads GT. R144 contributes to the N(2)-acetyl-L-ornithine binding site. A pyridoxal 5'-phosphate-binding site is contributed by 226–229; the sequence is DEVQ. Position 255 is an N6-(pyridoxal phosphate)lysine (K255). S283 provides a ligand contact to N(2)-acetyl-L-ornithine. Residue T284 participates in pyridoxal 5'-phosphate binding.

Belongs to the class-III pyridoxal-phosphate-dependent aminotransferase family. ArgD subfamily. As to quaternary structure, homodimer. Pyridoxal 5'-phosphate is required as a cofactor.

The protein localises to the cytoplasm. The catalysed reaction is N(2)-acetyl-L-ornithine + 2-oxoglutarate = N-acetyl-L-glutamate 5-semialdehyde + L-glutamate. The enzyme catalyses N-succinyl-(2S,6S)-2,6-diaminopimelate + 2-oxoglutarate = (S)-2-succinylamino-6-oxoheptanedioate + L-glutamate. It participates in amino-acid biosynthesis; L-arginine biosynthesis; N(2)-acetyl-L-ornithine from L-glutamate: step 4/4. It functions in the pathway amino-acid biosynthesis; L-lysine biosynthesis via DAP pathway; LL-2,6-diaminopimelate from (S)-tetrahydrodipicolinate (succinylase route): step 2/3. Involved in both the arginine and lysine biosynthetic pathways. The chain is Acetylornithine/succinyldiaminopimelate aminotransferase from Escherichia coli O6:H1 (strain CFT073 / ATCC 700928 / UPEC).